We begin with the raw amino-acid sequence, 319 residues long: N-acyl-aromatic-L-amino acid amidohydrolase (carboxylate-forming) (319 aa).

The hydrolytic domain stretch occupies residues 1 to 210; sequence MCSLPGSRKP…SILDFIELFN (210 aa). His-21 and Glu-24 together coordinate Zn(2+). Residues Arg-63 and 70-71 each bind substrate; that span reads NR. Position 116 (His-116) interacts with Zn(2+). Glu-178 and Tyr-288 together coordinate substrate. The tract at residues 211 to 318 is shielding domain; the sequence is QGMEFPAFEM…PGLTPSSTQT (108 aa). Residue Thr-318 is modified to Phosphothreonine.

It belongs to the AspA/AstE family. Aspartoacylase subfamily. In terms of assembly, exists as a mixture of homodimers and homotetramer, both catalytically active. Zn(2+) is required as a cofactor.

Its subcellular location is the apical cell membrane. It localises to the cytoplasm. It catalyses the reaction an N-acyl-aromatic L-alpha-amino acid + H2O = an aromatic L-alpha-amino acid + a carboxylate. It carries out the reaction an N-acetyl-L-cysteine-S-conjugate + H2O = an S-substituted L-cysteine + acetate. In terms of biological role, plays an important role in deacetylating mercapturic acids in kidney proximal tubules. Also acts on N-acetyl-aromatic amino acids. The sequence is that of N-acyl-aromatic-L-amino acid amidohydrolase (carboxylate-forming) (Acy3) from Rattus norvegicus (Rat).